Consider the following 258-residue polypeptide: Ubiquinone/menaquinone biosynthesis C-methyltransferase UbiE (258 aa).

The segment at 1–21 (MPESRTSADGGMETSYGFREV) is disordered. S-adenosyl-L-methionine is bound by residues threonine 81, aspartate 102, and 130-131 (NA).

Belongs to the class I-like SAM-binding methyltransferase superfamily. MenG/UbiE family.

It carries out the reaction a 2-demethylmenaquinol + S-adenosyl-L-methionine = a menaquinol + S-adenosyl-L-homocysteine + H(+). The enzyme catalyses a 2-methoxy-6-(all-trans-polyprenyl)benzene-1,4-diol + S-adenosyl-L-methionine = a 5-methoxy-2-methyl-3-(all-trans-polyprenyl)benzene-1,4-diol + S-adenosyl-L-homocysteine + H(+). It participates in quinol/quinone metabolism; menaquinone biosynthesis; menaquinol from 1,4-dihydroxy-2-naphthoate: step 2/2. Its pathway is cofactor biosynthesis; ubiquinone biosynthesis. Its function is as follows. Methyltransferase required for the conversion of demethylmenaquinol (DMKH2) to menaquinol (MKH2) and the conversion of 2-polyprenyl-6-methoxy-1,4-benzoquinol (DDMQH2) to 2-polyprenyl-3-methyl-6-methoxy-1,4-benzoquinol (DMQH2). The polypeptide is Ubiquinone/menaquinone biosynthesis C-methyltransferase UbiE (Rhizobium leguminosarum bv. trifolii (strain WSM2304)).